The chain runs to 314 residues: MEWSEVEVHTTNEAVEPVANVLTEFGAAGVSIEDVADFLREREDKFGEIYALRREDYPEDGVIIKAYFLKTTEFVEQIPEIEQTLKNLSTFDIPLGNFQFVVNDVDDEEWATAWKKYYHPVQITDRITIVPSWESYTPSANEIIIELDPGMAFGTGTHPTTQLCIRALSDYLQPGDEVIDVGTGSGVLSIASAKLGAKSILATDLDEIATRAAEENITLNKTEHIITVKQNNLLQDINKTDVDIVVANILAEVILLFPEDVYRALKPGGIFIASGIIEDKAKVVEEALKKAGLVIEKMEQQGDWVAIISKRGVE.

S-adenosyl-L-methionine is bound by residues Thr161, Gly182, Asp204, and Asn248.

The protein belongs to the methyltransferase superfamily. PrmA family.

It is found in the cytoplasm. It catalyses the reaction L-lysyl-[protein] + 3 S-adenosyl-L-methionine = N(6),N(6),N(6)-trimethyl-L-lysyl-[protein] + 3 S-adenosyl-L-homocysteine + 3 H(+). Functionally, methylates ribosomal protein L11. This chain is Ribosomal protein L11 methyltransferase, found in Listeria monocytogenes serotype 4b (strain CLIP80459).